The following is a 222-amino-acid chain: Uracil-DNA glycosylase (222 aa).

Asp-61 functions as the Proton acceptor in the catalytic mechanism.

It belongs to the uracil-DNA glycosylase (UDG) superfamily. UNG family.

It is found in the cytoplasm. It carries out the reaction Hydrolyzes single-stranded DNA or mismatched double-stranded DNA and polynucleotides, releasing free uracil.. Functionally, excises uracil residues from the DNA which can arise as a result of misincorporation of dUMP residues by DNA polymerase or due to deamination of cytosine. In Aeromonas salmonicida (strain A449), this protein is Uracil-DNA glycosylase.